A 108-amino-acid chain; its full sequence is Peptidyl-prolyl cis-trans isomerase FKBP1B (108 aa).

In terms of domain architecture, PPIase FKBP-type spans 20–108 (GQTCVVHYTG…IFGVELLNLE (89 aa)).

The protein belongs to the FKBP-type PPIase family. FKBP1 subfamily. Identified in a complex composed of RYR2, FKBP1B, PKA catalytic subunit, PRKAR2A, AKAP6, and the protein phosphatases PP2A and PP1. Interacts directly with RYR2.

It is found in the cytoplasm. Its subcellular location is the sarcoplasmic reticulum. The catalysed reaction is [protein]-peptidylproline (omega=180) = [protein]-peptidylproline (omega=0). Its activity is regulated as follows. Inhibited by both FK506 and rapamycin. Has the potential to contribute to the immunosuppressive and toxic effects of FK506 and rapamycin. PPIases accelerate the folding of proteins. It catalyzes the cis-trans isomerization of proline imidic peptide bonds in oligopeptides. This chain is Peptidyl-prolyl cis-trans isomerase FKBP1B (FKBP1B), found in Oryctolagus cuniculus (Rabbit).